The sequence spans 86 residues: Small ribosomal subunit protein bS16 (86 aa).

This sequence belongs to the bacterial ribosomal protein bS16 family.

The polypeptide is Small ribosomal subunit protein bS16 (Stenotrophomonas maltophilia (strain K279a)).